Here is a 536-residue protein sequence, read N- to C-terminus: Heparanase (536 aa).

A signal peptide spans 1–28; the sequence is MLRPLLLLWLWGRLGALTQGTPAGTAPT. Residues 55–57 and Thr90 each bind heparan sulfate group; that span reads DAS. The propeptide at 103-150 is linker peptide; the sequence is PTSEERSYWQSQDNNDICGSERVSADVLRKLQMEWPFQELLLLREQYQ. An intrachain disulfide couples Cys120 to Cys172. 151–155 lines the heparan sulfate group pocket; sequence REFKN. 3 N-linked (GlcNAc...) asparagine glycosylation sites follow: Asn155, Asn193, and Asn210. Glu218 serves as the catalytic Proton donor. Heparan sulfate group-binding positions include 263–273, His289, and Arg296; that span reads QPRGKTVKLLR. A required for heterodimerization with the heparanase 8 kDa subunit region spans residues 281 to 410; sequence EVIDSLTWHH…LLFKKLVGPK (130 aa). Glu336 (nucleophile) is an active-site residue. Residues 341-343 and 382-384 each bind heparan sulfate group; these read YGG and GNY. Cysteines 430 and 535 form a disulfide. Asn452 carries N-linked (GlcNAc...) asparagine glycosylation. Residues 520–536 are required for transferring proheparanase to the Golgi apparatus, secretion and subsequent enzyme activity and for enhancement of PKB/AKT1 phosphorylation; sequence FSYGFFVIRNAKIAACI.

Belongs to the glycosyl hydrolase 79 family. Heterodimer; heterodimer formation between the 8 kDa and the 50 kDa subunits is required for enzyme activity. Interacts with TF; the interaction, inhibited by heparin, enhances the generation of activated factor X and activates coagulation. Interacts with HRG; the interaction is enhanced at acidic pH, partially inhibits binding of HPSE to cell surface receptors and modulates its enzymatic activity. Interacts with SDC1; the interaction enhances the shedding of SDC1. Interacts with HPSE2. Proteolytically processed. The cleavage of the 65 kDa form leads to the generation of a linker peptide, and the 8 kDa and 50 kDa products. The active form, the 8/50 kDa heterodimer, is resistant to degradation. Complete removal of the linker peptide appears to be a prerequisite to the complete activation of the enzyme. In terms of processing, N-glycosylated. Glycosylation of the 50 kDa subunit appears to be essential for its solubility.

Its subcellular location is the lysosome membrane. The protein localises to the secreted. The protein resides in the nucleus. The enzyme catalyses endohydrolysis of (1-&gt;4)-beta-D-glycosidic bonds of heparan sulfate chains in heparan sulfate proteoglycan.. Its activity is regulated as follows. Inhibited by laminarin sulfate and, to a lower extent, by heparin and sulfamin. Activated by calcium and magnesium. Inhibited by EDTA. In terms of biological role, endoglycosidase that cleaves heparan sulfate proteoglycans (HSPGs) into heparan sulfate side chains and core proteoglycans. Participates in extracellular matrix (ECM) degradation and remodeling. Selectively cleaves the linkage between a glucuronic acid unit and an N-sulfo glucosamine unit carrying either a 3-O-sulfo or a 6-O-sulfo group. Can also cleave the linkage between a glucuronic acid unit and an N-sulfo glucosamine unit carrying a 2-O-sulfo group, but not linkages between a glucuronic acid unit and a 2-O-sulfated iduronic acid moiety. It is essentially inactive at neutral pH but becomes active under acidic conditions such as during tumor invasion and in inflammatory processes. Facilitates cell migration associated with metastasis, wound healing and inflammation. Enhances shedding of syndecans, and increases endothelial invasion and angiogenesis in myelomas. Acts as a procoagulant by increasing the generation of activation factor X in the presence of tissue factor and activation factor VII. Increases cell adhesion to the extracellular matrix (ECM), independent of its enzymatic activity. Induces AKT1/PKB phosphorylation via lipid rafts increasing cell mobility and invasion. Heparin increases this AKT1/PKB activation. Regulates osteogenesis. Enhances angiogenesis through up-regulation of SRC-mediated activation of VEGF. Implicated in hair follicle inner root sheath differentiation and hair homeostasis. This chain is Heparanase (Hpse), found in Rattus norvegicus (Rat).